Consider the following 39-residue polypeptide: Contryphan-Cal4 (39 aa).

The signal sequence occupies residues 1–20 (MTRTAVLLLTLLFLVAMAAS). The cysteines at positions 29 and 35 are disulfide-linked.

As to expression, expressed by the venom duct.

It is found in the secreted. Probable neurotoxin. In Californiconus californicus (California cone), this protein is Contryphan-Cal4.